Here is a 487-residue protein sequence, read N- to C-terminus: MKYKDLREFLTLLEGQGELVRIKQEIDPYLEMAEISDRTLRKGGPAILFENPKGYRMPVLCNLFGTPKRVALGMGQEDTHALRELGKLLAFLKEPEPPKGFKELIGQLPQWKQVLNMPSKVLGKADCQQVVLSGDEVELYKLPIMHCHEGDVAPLVAWGLTITQGPYKKRQNLGIYRQQLIGKNKLIMRWLSHRGGALDFHEWKEANPDKPFPVSVAIGADPATILAAVTPIPDTLSEYAFAGLLRGQKTEVTKSISNDLEVPASAEIVLEGYIDPNETALEGPYGDHTGYYNEQEYFPVFTVTHITMRRDAIYHSTYTGRPPDEPAVLGEALNEVFIPILQKQFPEIVDFYLPPEGCSYRLAVVTIKKQYAGHAKRVMMGVWSFLRQFMYTKFVIVCDDDVNARDWKDVIWAITTRCDPSRDTTLIDHTPIDYLDFASPIAGLGSKMGIDATNKWPGETSREWGTPIKKDPNVVKRVDEIWDQLGL.

Asparagine 172 is a binding site for Mn(2+). Residues 175-177 (IYR), 189-191 (RWL), and 194-195 (RG) contribute to the prenylated FMN site. Residue glutamate 238 participates in Mn(2+) binding. Aspartate 287 (proton donor) is an active-site residue.

This sequence belongs to the UbiD family. In terms of assembly, homohexamer. Prenylated FMN serves as cofactor. Mn(2+) is required as a cofactor.

It is found in the cell membrane. The enzyme catalyses a 4-hydroxy-3-(all-trans-polyprenyl)benzoate + H(+) = a 2-(all-trans-polyprenyl)phenol + CO2. It functions in the pathway cofactor biosynthesis; ubiquinone biosynthesis. Its function is as follows. Catalyzes the decarboxylation of 3-octaprenyl-4-hydroxy benzoate to 2-octaprenylphenol, an intermediate step in ubiquinone biosynthesis. This Actinobacillus pleuropneumoniae serotype 5b (strain L20) protein is 3-octaprenyl-4-hydroxybenzoate carboxy-lyase.